A 214-amino-acid polypeptide reads, in one-letter code: Pyrrolidone-carboxylate peptidase (214 aa).

Active-site residues include Glu-80, Cys-143, and His-166.

The protein belongs to the peptidase C15 family. As to quaternary structure, homotetramer.

It localises to the cytoplasm. The catalysed reaction is Release of an N-terminal pyroglutamyl group from a polypeptide, the second amino acid generally not being Pro.. Removes 5-oxoproline from various penultimate amino acid residues except L-proline. This chain is Pyrrolidone-carboxylate peptidase, found in Enterobacter sp. (strain 638).